A 114-amino-acid polypeptide reads, in one-letter code: Iron-sulfur cluster insertion protein ErpA (114 aa).

3 residues coordinate iron-sulfur cluster: cysteine 42, cysteine 106, and cysteine 108.

This sequence belongs to the HesB/IscA family. In terms of assembly, homodimer. Iron-sulfur cluster serves as cofactor.

Functionally, required for insertion of 4Fe-4S clusters for at least IspG. The sequence is that of Iron-sulfur cluster insertion protein ErpA from Hamiltonella defensa subsp. Acyrthosiphon pisum (strain 5AT).